We begin with the raw amino-acid sequence, 455 residues long: ATP-dependent protease ATPase subunit HslU (455 aa).

Residues I19 and 61–66 (GVGKTE) contribute to the ATP site. A disordered region spans residues 144–163 (ESKVGFANEPAEDAASKKEK). D268, E333, and R405 together coordinate ATP.

It belongs to the ClpX chaperone family. HslU subfamily. As to quaternary structure, a double ring-shaped homohexamer of HslV is capped on each side by a ring-shaped HslU homohexamer. The assembly of the HslU/HslV complex is dependent on binding of ATP.

The protein resides in the cytoplasm. Its function is as follows. ATPase subunit of a proteasome-like degradation complex; this subunit has chaperone activity. The binding of ATP and its subsequent hydrolysis by HslU are essential for unfolding of protein substrates subsequently hydrolyzed by HslV. HslU recognizes the N-terminal part of its protein substrates and unfolds these before they are guided to HslV for hydrolysis. This chain is ATP-dependent protease ATPase subunit HslU, found in Francisella tularensis subsp. novicida (strain U112).